A 529-amino-acid chain; its full sequence is Delayed-rectifier potassium channel regulatory subunit KCNS1 (529 aa).

At 1 to 217 (MLMLLVRGTH…LTMENPGYSL (217 aa)) the chain is on the cytoplasmic side. The helical transmembrane segment at 218-239 (PSKLFSCVSISVVLASIAAMCI) threads the bilayer. Residues 240 to 270 (HSLPEYQAREAAAAVAAVAAGRSPEGVRDDP) lie on the Extracellular side of the membrane. The helical transmembrane segment at 271 to 293 (VLRRLEYFCIAWFSFEVSSRLLL) threads the bilayer. The Cytoplasmic segment spans residues 294-304 (APSTRNFFCHP). The helical transmembrane segment at 305 to 322 (LNLIDIVSVLPFYLTLLA) threads the bilayer. Residues 323–340 (GVALGDQGGTGGKELGHL) are Extracellular-facing. The helical; Voltage-sensor transmembrane segment at 341–361 (GKVVQVFRLMRIFRVLKLARH) threads the bilayer. Residues 362–376 (STGLRSLGATLKHSY) are Cytoplasmic-facing. Residues 377 to 398 (REVGILLLYLAVGVSVFSGVAY) form a helical membrane-spanning segment. Over 399–411 (TAEKEEDVGFNTI) the chain is Extracellular. Positions 412–423 (PACWWWGTVSMT) form an intramembrane region, helical. The Selectivity filter motif lies at 424–429 (TVGYGD). An intramembrane segment occupies 424-431 (TVGYGDVV). The Extracellular portion of the chain corresponds to 432 to 438 (PVTVAGK). A helical membrane pass occupies residues 439–467 (LAASGCILGGILVVALPITIIFNKFSHFY). At 468 to 529 (RRQKALEAAV…PSEPPHPQMY (62 aa)) the chain is on the cytoplasmic side. Residues 494–529 (GVSEASLETSRETSQEGRSADLETQAPSEPPHPQMY) are disordered. Residues 502 to 514 (TSRETSQEGRSAD) are compositionally biased toward basic and acidic residues.

Belongs to the potassium channel family. S (TC 1.A.1.2) subfamily. Kv9.1/KCNS1 sub-subfamily. Heterotetramer with KCNB1. Heterotetramer with KCNB2. Does not form homomultimers.

It is found in the cell membrane. Its function is as follows. Potassium channel regulatory subunit that modulate the delayed rectifier voltage-gated potassium channel activity of KCNB1 and KCNB2 by altering their kinetics, expression levels, and shifting the half-inactivation potential to more polarized values. While it does not form functional channels on its own, it can form functional heterotetrameric channels with KCNB1 and KCNB2. Each regulatory subunit has unique regulatory properties that can lead to extensive inhibition, significant changes in kinetics, and/or substantial shifts in the voltage dependencies of the inactivation process. This is Delayed-rectifier potassium channel regulatory subunit KCNS1 from Macaca mulatta (Rhesus macaque).